The following is a 238-amino-acid chain: Photosynthetic NDH subunit of lumenal location 1, chloroplastic (238 aa).

It belongs to the PsbP family. As to quaternary structure, part of the chloroplast NDH complex, composed of a mixture of chloroplast and nucleus encoded subunits. Component of the NDH lumenal subcomplex, at least composed of PnsL1, PnsL2, PnsL3, PnsL4 and PnsL5.

It localises to the plastid. The protein resides in the chloroplast thylakoid membrane. NDH shuttles electrons from NAD(P)H:plastoquinone, via FMN and iron-sulfur (Fe-S) centers, to quinones in the photosynthetic chain and possibly in a chloroplast respiratory chain. The immediate electron acceptor for the enzyme in this species is believed to be plastoquinone. Couples the redox reaction to proton translocation, and thus conserves the redox energy in a proton gradient. Required for accumulation of the chloroplast NAD(P)H dehydrogenase (NDH) complex. The sequence is that of Photosynthetic NDH subunit of lumenal location 1, chloroplastic from Arabidopsis thaliana (Mouse-ear cress).